The following is a 314-amino-acid chain: Malate dehydrogenase (314 aa).

Residues 11–16 (GSGNIG) and Asp-35 each bind NAD(+). The substrate site is built by Arg-84 and Arg-90. NAD(+) is bound by residues Asn-97 and 120-122 (ITN). Residues Asn-122 and Arg-153 each contribute to the substrate site. His-177 functions as the Proton acceptor in the catalytic mechanism.

Belongs to the LDH/MDH superfamily. MDH type 3 family.

It carries out the reaction (S)-malate + NAD(+) = oxaloacetate + NADH + H(+). Catalyzes the reversible oxidation of malate to oxaloacetate. This is Malate dehydrogenase from Rickettsia bellii (strain RML369-C).